Consider the following 275-residue polypeptide: Methyltransferase str2 (275 aa).

Belongs to the methyltransferase superfamily. LaeA methyltransferase family.

Its pathway is mycotoxin biosynthesis. Methyltransferase; part of the gene cluster that mediates the biosynthesis of strobilurin A, an antifungal polyketide that contains a key beta-methoxyacrylate toxophore that targets the complex III of the mitochondrial electron transport chain. Strobilurin biosynthesis begins with construction of benzoyl CoA by step-wise elimination of ammonia from phenylalanine by the phenylalanine ammonia-lyase str11, oxygenation by str8 and retro-Claisen reaction to form benzoic acid, which is activated to its CoA thiolester benzoyl CoA by the dedicated CoA ligase str10. Benzoyl CoA forms the starter unit for the highly reducing polyketide synthase stpks1 that produces the polyketide prestrobilutin A. The FAD-dependent oxygenase str9 then catalyzes the key oxidative rearrangement responsible for the creation of the beta-methoxyacrylate toxophore. Str9 performs epoxidation of the 2,3 olefin of prestrobilutin A, followed by Meinwald rearrangement to furnish the aldehyde intermediate. Rapid enolization of the aldehyde intermediate would give the beta-methoxyacrylate skeleton and methylations catalyzed by str2 and str3 complete the synthesis and lead to the production of strobilurin A. The short-chain dehydrogenase stl2 and the dehydrogenase str4 play a role in the shunt pathway leading to the production of bolineol. The cluster encodes no obvious halogenase gene that could be involved in production of strobilurin B, nor any obvious dimethylallyl-transferase that could be involved in the production of strobilurin G. It is possible that unknown proteins encoded in, or near, the cluster (such as str1 or stl1) may form new classes of halogenases or dimethylally-transferases, or that the responsible genes are located elsewhere on the genome. Similarly, proteins encoded by str5/str6 hydrolases appear to have no chemical role in the biosynthesis of strobilurin A. Finally, no obvious self-resistance gene is found within the cluster. The protein is Methyltransferase str2 of Strobilurus tenacellus.